The chain runs to 301 residues: Light-independent protochlorophyllide reductase iron-sulfur ATP-binding protein (301 aa).

The span at 1–13 shows a compositional bias: low complexity; the sequence is MNVTLRPPLTTAP. Residues 1–21 are disordered; it reads MNVTLRPPLTTAPRRPDGAGS. Residues 45 to 50 and Lys74 each bind ATP; that span reads GIGKST. Mg(2+) is bound at residue Ser49. Residues Cys130 and Cys164 each contribute to the [4Fe-4S] cluster site. ATP contacts are provided by residues 215-216 and 239-241; these read NR and PDL.

It belongs to the NifH/BchL/ChlL family. Homodimer. Protochlorophyllide reductase is composed of three subunits; BchL, BchN and BchB. [4Fe-4S] cluster serves as cofactor.

The enzyme catalyses chlorophyllide a + oxidized 2[4Fe-4S]-[ferredoxin] + 2 ADP + 2 phosphate = protochlorophyllide a + reduced 2[4Fe-4S]-[ferredoxin] + 2 ATP + 2 H2O. Its pathway is porphyrin-containing compound metabolism; bacteriochlorophyll biosynthesis (light-independent). Component of the dark-operative protochlorophyllide reductase (DPOR) that uses Mg-ATP and reduced ferredoxin to reduce ring D of protochlorophyllide (Pchlide) to form chlorophyllide a (Chlide). This reaction is light-independent. The L component serves as a unique electron donor to the NB-component of the complex, and binds Mg-ATP. This Bradyrhizobium sp. (strain BTAi1 / ATCC BAA-1182) protein is Light-independent protochlorophyllide reductase iron-sulfur ATP-binding protein.